We begin with the raw amino-acid sequence, 170 residues long: J domain-containing protein (170 aa).

The 66-residue stretch at 17–82 (DYYALLGCDE…SKRALYDKWR (66 aa)) folds into the J domain. The interval 101-170 (QQSMHWSKPN…VISKFRNYEI (70 aa)) is disordered. Residues 110 to 120 (NTKDRMLEGEP) are compositionally biased toward basic and acidic residues. 2 stretches are compositionally biased toward low complexity: residues 121–135 (GKPS…SNPG) and 142–153 (GGAALWGRWGAG).

This is J domain-containing protein (jdp) from Manduca sexta (Tobacco hawkmoth).